A 72-amino-acid polypeptide reads, in one-letter code: Exodeoxyribonuclease 7 small subunit (72 aa).

Belongs to the XseB family. Heterooligomer composed of large and small subunits.

Its subcellular location is the cytoplasm. It catalyses the reaction Exonucleolytic cleavage in either 5'- to 3'- or 3'- to 5'-direction to yield nucleoside 5'-phosphates.. In terms of biological role, bidirectionally degrades single-stranded DNA into large acid-insoluble oligonucleotides, which are then degraded further into small acid-soluble oligonucleotides. The polypeptide is Exodeoxyribonuclease 7 small subunit (Chlamydia trachomatis serovar A (strain ATCC VR-571B / DSM 19440 / HAR-13)).